Consider the following 86-residue polypeptide: MKSIVFVALFGLALLAVVCSASEDAHKELLKEVVRAMVVDKTDAVQAEERECRWYLGGCSQDGDCCKHLQCHSNYEWCIWDGTFSK.

The first 21 residues, 1 to 21 (MKSIVFVALFGLALLAVVCSA), serve as a signal peptide directing secretion. The propeptide occupies 22 to 50 (SEDAHKELLKEVVRAMVVDKTDAVQAEER). 3 cysteine pairs are disulfide-bonded: cysteine 52-cysteine 66, cysteine 59-cysteine 71, and cysteine 65-cysteine 78.

The protein belongs to the neurotoxin 10 (Hwtx-1) family. 17 (Hntx-9) subfamily. Expressed by the venom gland.

Its subcellular location is the secreted. Ion channel inhibitor. This chain is Omega-theraphotoxin-Hhn1f 1, found in Cyriopagopus hainanus (Chinese bird spider).